The sequence spans 149 residues: Calmodulin (149 aa).

An N-acetylalanine modification is found at Ala-2. 4 consecutive EF-hand domains span residues 8–43 (EQIA…LGQN), 44–79 (PTEA…KMKD), 81–116 (DTEE…LGEK), and 117–149 (LTDE…MMAK). Residues Asp-21, Asp-23, Asp-25, Thr-27, Glu-32, Asp-57, Asp-59, Asn-61, Thr-63, Glu-68, Asp-94, Asp-96, Asn-98, and Glu-105 each coordinate Ca(2+). Lys-116 carries the N6,N6,N6-trimethyllysine modification. Residues Asp-130, Asp-132, Asp-134, His-136, and Glu-141 each contribute to the Ca(2+) site.

It belongs to the calmodulin family.

Its function is as follows. Calmodulin mediates the control of a large number of enzymes, ion channels and other proteins by Ca(2+). Among the enzymes to be stimulated by the calmodulin-Ca(2+) complex are a number of protein kinases and phosphatases. This chain is Calmodulin, found in Stylonychia lemnae (Ciliate).